A 402-amino-acid polypeptide reads, in one-letter code: Argininosuccinate synthase (402 aa).

7 to 15 provides a ligand contact to ATP; the sequence is LYSGGLDTS. Tyrosine 83 lines the L-citrulline pocket. Glycine 113 is a binding site for ATP. Threonine 115, asparagine 119, and aspartate 120 together coordinate L-aspartate. L-citrulline is bound at residue asparagine 119. 5 residues coordinate L-citrulline: arginine 123, serine 169, serine 178, glutamate 253, and tyrosine 265.

The protein belongs to the argininosuccinate synthase family. Type 1 subfamily. In terms of assembly, homotetramer.

The protein resides in the cytoplasm. It catalyses the reaction L-citrulline + L-aspartate + ATP = 2-(N(omega)-L-arginino)succinate + AMP + diphosphate + H(+). Its pathway is amino-acid biosynthesis; L-arginine biosynthesis; L-arginine from L-ornithine and carbamoyl phosphate: step 2/3. The chain is Argininosuccinate synthase from Thermoplasma acidophilum (strain ATCC 25905 / DSM 1728 / JCM 9062 / NBRC 15155 / AMRC-C165).